The sequence spans 337 residues: Probable cytosolic iron-sulfur protein assembly protein Ciao1 (337 aa).

WD repeat units lie at residues glycine 12–alanine 51, glycine 58–asparagine 97, glycine 102–cysteine 141, threonine 147–serine 186, serine 193–glycine 232, tyrosine 251–glutamate 290, and alanine 301–glutamate 337.

Belongs to the WD repeat CIA1 family.

In terms of biological role, essential component of the cytosolic iron-sulfur (Fe/S) protein assembly machinery. Required for the maturation of extramitochondrial Fe/S proteins. The protein is Probable cytosolic iron-sulfur protein assembly protein Ciao1 of Aedes aegypti (Yellowfever mosquito).